We begin with the raw amino-acid sequence, 440 residues long: ATP-dependent protease ATPase subunit HslU (440 aa).

Residues Ile18, Gly60–Glu65, Asp253, Glu318, and Arg390 each bind ATP.

This sequence belongs to the ClpX chaperone family. HslU subfamily. A double ring-shaped homohexamer of HslV is capped on each side by a ring-shaped HslU homohexamer. The assembly of the HslU/HslV complex is dependent on binding of ATP.

Its subcellular location is the cytoplasm. Its function is as follows. ATPase subunit of a proteasome-like degradation complex; this subunit has chaperone activity. The binding of ATP and its subsequent hydrolysis by HslU are essential for unfolding of protein substrates subsequently hydrolyzed by HslV. HslU recognizes the N-terminal part of its protein substrates and unfolds these before they are guided to HslV for hydrolysis. In Shewanella oneidensis (strain ATCC 700550 / JCM 31522 / CIP 106686 / LMG 19005 / NCIMB 14063 / MR-1), this protein is ATP-dependent protease ATPase subunit HslU.